Reading from the N-terminus, the 907-residue chain is Putative pentatricopeptide repeat-containing protein At5g59900 (907 aa).

PPR repeat units follow at residues 103-137, 155-185, 191-225, 226-260, 261-295, 296-330, 331-365, 366-400, 401-435, 436-470, 471-505, 506-540, 541-575, 576-610, 611-645, 646-680, 681-715, 716-750, 751-782, 786-820, 821-855, and 856-890; these read STASFCILIHALVKANLFWPASSLLQTLLLRALKP, SSSSFDLLIQHYVRSRRVLDGVLVFKMMITK, EVRTLSALLHGLVKFRHFGLAMELFNDMVSVGIRP, DVYIYTGVIRSLCELKDLSRAKEMIAHMEATGCDV, NIVPYNVLIDGLCKKQKVWEAVGIKKDLAGKDLKP, DVVTYCTLVYGLCKVQEFEIGLEMMDEMLCLRFSP, SEAAVSSLVEGLRKRGKIEEALNLVKRVVDFGVSP, NLFVYNALIDSLCKGRKFHEAELLFDRMGKIGLRP, NDVTYSILIDMFCRRGKLDTALSFLGEMVDTGLKL, SVYPYNSLINGHCKFGDISAAEGFMAEMINKKLEP, TVVTYTSLMGGYCSKGKINKALRLYHEMTGKGIAP, SIYTFTTLLSGLFRAGLIRDAVKLFNEMAEWNVKP, NRVTYNVMIEGYCEEGDMSKAFEFLKEMTEKGIVP, DTYSYRPLIHGLCLTGQASEAKVFVDGLHKGNCEL, NEICYTGLLHGFCREGKLEEALSVCQEMVQRGVDL, DLVCYGVLIDGSLKHKDRKLFFGLLKEMHDRGLKP, DDVIYTSMIDAKSKTGDFKEAFGIWDLMINEGCVP, NEVTYTAVINGLCKAGFVNEAEVLCSKMQPVSSVP, NQVTYGCFLDILTKGEVDMQKAVELHNAILKG, NTATYNMLIRGFCRQGRIEEASELITRMIGDGVSP, DCITYTTMINELCRRNDVKKAIELWNSMTEKGIRP, and DRVAYNTLIHGCCVAGEMGKATELRNEMLRQGLIP. Positions 887–907 are disordered; the sequence is GLIPNNKTSRTTTSNDTSSKS. Positions 891-907 are enriched in low complexity; that stretch reads NNKTSRTTTSNDTSSKS.

Belongs to the PPR family. P subfamily.

In Arabidopsis thaliana (Mouse-ear cress), this protein is Putative pentatricopeptide repeat-containing protein At5g59900.